The primary structure comprises 211 residues: Large ribosomal subunit protein uL3 (211 aa).

A compositionally biased stretch (polar residues) spans 130 to 139 (QDATHGNSLS). The tract at residues 130-151 (QDATHGNSLSHRAPGSIGQNQT) is disordered. N5-methylglutamine is present on Q150.

It belongs to the universal ribosomal protein uL3 family. Part of the 50S ribosomal subunit. Forms a cluster with proteins L14 and L19. Post-translationally, methylated by PrmB.

In terms of biological role, one of the primary rRNA binding proteins, it binds directly near the 3'-end of the 23S rRNA, where it nucleates assembly of the 50S subunit. The polypeptide is Large ribosomal subunit protein uL3 (Alcanivorax borkumensis (strain ATCC 700651 / DSM 11573 / NCIMB 13689 / SK2)).